The chain runs to 138 residues: DNA-directed RNA polymerase subunit omega (138 aa).

This sequence belongs to the RNA polymerase subunit omega family. The RNAP catalytic core consists of 2 alpha, 1 beta, 1 beta' and 1 omega subunit. When a sigma factor is associated with the core the holoenzyme is formed, which can initiate transcription.

The catalysed reaction is RNA(n) + a ribonucleoside 5'-triphosphate = RNA(n+1) + diphosphate. In terms of biological role, promotes RNA polymerase assembly. Latches the N- and C-terminal regions of the beta' subunit thereby facilitating its interaction with the beta and alpha subunits. The sequence is that of DNA-directed RNA polymerase subunit omega from Thermodesulfovibrio yellowstonii (strain ATCC 51303 / DSM 11347 / YP87).